The chain runs to 419 residues: MPIFKKTLIVLSFIFLISILIYLNMYLFGTSTVGIYGVILITYLVIKLGLSFLYEPFKGNPHDYKVAAVIPSYNEDAESLLETLKSVLAQTYPLSEIYIVDDGSSNTDAIQLIEEYVNREVDICRNVIVHRSLVNKGKRHAQAWAFERSDADVFLTVDSDTYIYPNALEELLKSFNDETVYAATGHLNARNRQTNLLTRLTDIRYDNAFGVERAAQSLTGNILVCSGPLSIYRREVIIPNLERYKNQTFLGLPVSIGDDRCLTNYAIDLGRTVYQSTARCDTDVPFQLKSYLKQQNRWNKSFFRESIISVKKILSNPIVALWTIFEVVMFMMLIVAIGNLLFNQAIQLDLIKLFAFLSIIFIVALCRNVHYMVKHPASFLLSPLYGILHLFVLQPLKLYSLCTIKNTEWGTRKKVTIFK.

Helical transmembrane passes span 8 to 28, 33 to 53, 318 to 338, 345 to 365, and 376 to 396; these read LIVL…MYLF, VGIY…LSFL, IVAL…VAIG, AIQL…IVAL, and PASF…LQPL.

Belongs to the NodC/HAS family. Requires Mg(2+) as cofactor.

It is found in the cell membrane. It carries out the reaction [hyaluronan](n) + UDP-N-acetyl-alpha-D-glucosamine = N-acetyl-beta-D-glucosaminyl-(1-&gt;4)-[hyaluronan](n) + UDP + H(+). The catalysed reaction is N-acetyl-beta-D-glucosaminyl-(1-&gt;4)-[hyaluronan](n) + UDP-alpha-D-glucuronate = [hyaluronan](n+1) + UDP + H(+). It participates in glycan biosynthesis; hyaluronan biosynthesis. In terms of biological role, glycosaminoglycan synthesis. The hyaluronic acid capsule is involved in the pathogenicity of group A Streptococci; it may be the major virulence determinant. In Streptococcus pyogenes serotype M6 (strain ATCC BAA-946 / MGAS10394), this protein is Hyaluronan synthase (hasA).